Reading from the N-terminus, the 372-residue chain is GTP cyclohydrolase 1 type 2 homolog (372 aa).

Positions 67, 68, 106, 332, and 335 each coordinate a divalent metal cation.

It belongs to the GTP cyclohydrolase I type 2/NIF3 family. Homohexamer.

The protein is GTP cyclohydrolase 1 type 2 homolog of Halalkalibacterium halodurans (strain ATCC BAA-125 / DSM 18197 / FERM 7344 / JCM 9153 / C-125) (Bacillus halodurans).